The following is a 387-amino-acid chain: Limonene 1,2-monooxygenase (387 aa).

Belongs to the bacterial luciferase oxidoreductase family. FAD serves as cofactor.

It carries out the reaction (4S)-limonene + NADPH + O2 + H(+) = limonene 1,2-epoxide + NADP(+) + H2O. The enzyme catalyses (4S)-limonene + NADH + O2 + H(+) = limonene 1,2-epoxide + NAD(+) + H2O. The catalysed reaction is (4R)-limonene + NADH + O2 + H(+) = limonene 1,2-epoxide + NAD(+) + H2O. It catalyses the reaction (4R)-limonene + NADPH + O2 + H(+) = limonene 1,2-epoxide + NADP(+) + H2O. The protein operates within terpene metabolism; (4R)-limonene degradation; (1S,4R)-1-hydroxylimonen-2-one from (4R)-limonene: step 1/3. Its function is as follows. Acts on both enantiomers of limonene by their NAD-dependent epoxidation at the 1,2 double bond forming limonene-1,2-epoxide. The polypeptide is Limonene 1,2-monooxygenase (limB) (Rhodococcus erythropolis (Arthrobacter picolinophilus)).